The sequence spans 76 residues: SAGKFIVIFKNDVSEDKIRETKDEVIAEGGTITNEYNMPGMKGFAGELTPQSLTKFQGLQGDLIDSIEEDGIVTTQ.

Residue S1 is modified to N-acetylserine.

Belongs to the protease inhibitor I9 family.

Specifically inhibits an endogenous intracellular serine proteinase (proteinase A). This Pleurotus ostreatus (Oyster mushroom) protein is Serine proteinase inhibitor IA-1.